Here is a 199-residue protein sequence, read N- to C-terminus: MLLLLTLAFLASPTCRAQNVLGNAAGKYFYVQGEDQGQLKGMRIFLSVFKFIKGFQLQFGSNWTDVYGTRSDNFIDFLLEDGEHVIKVEGSAVICLTSLTFTTNKGRVATFGVRRGRYFSDTGGSDKHLVTVNGMHAPGLCVRGIGFKWGNINANGNDHYNNKEDKADNKDADNKDADNKDDGDEDDDGNDDDDQKDES.

The N-terminal stretch at 1 to 18 is a signal peptide; that stretch reads MLLLLTLAFLASPTCRAQ. The Jacalin-type lectin domain occupies 19-151; the sequence is NVLGNAAGKY…VRGIGFKWGN (133 aa). The N-linked (GlcNAc...) asparagine glycan is linked to Asn62. The segment at 159–199 is disordered; it reads HYNNKEDKADNKDADNKDADNKDDGDEDDDGNDDDDQKDES. Residues 160-180 show a composition bias toward basic and acidic residues; that stretch reads YNNKEDKADNKDADNKDADNK. The span at 181–199 shows a compositional bias: acidic residues; it reads DDGDEDDDGNDDDDQKDES.

It to rat SBP. In terms of tissue distribution, prostate.

In terms of biological role, this protein seems to be functional equivalent to rat prostatic spermine-binding protein, which is involved in polyamine binding. The polypeptide is Prostatic spermine-binding protein (Sbp) (Mus musculus (Mouse)).